Here is a 915-residue protein sequence, read N- to C-terminus: DNA repair-scaffolding protein (915 aa).

Positions methionine 1–serine 15 are enriched in basic residues. Disordered regions lie at residues methionine 1 to glutamine 30 and phenylalanine 56 to threonine 114. Residues phenylalanine 56–leucine 65 show a composition bias toward polar residues. Basic and acidic residues predominate over residues alanine 67–glutamine 85. The span at glutamate 86 to aspartate 107 shows a compositional bias: polar residues. The necessary for interaction with RAD51 stretch occupies residues glutamate 151–glutamate 450.

In terms of assembly, found in a complex, at least composed of BLM, RAD51 and SPIDR; the complex formation is mediated by SPIDR. Interacts (via C-terminal region) with BLM; the interaction is direct. Interacts with RAD51; the interaction is direct. Interacts (via the C-terminal region) with FIGNL1 (via N-terminal one-half region); the interaction is direct.

The protein localises to the nucleus. Plays a role in DNA double-strand break (DBS) repair via homologous recombination (HR). Serves as a scaffolding protein that helps to promote the recruitment of DNA-processing enzymes like the helicase BLM and recombinase RAD51 to site of DNA damage, and hence contributes to maintain genomic integrity. The protein is DNA repair-scaffolding protein (SPIDR) of Homo sapiens (Human).